We begin with the raw amino-acid sequence, 395 residues long: Flap endonuclease 1 (395 aa).

The interval M1–A108 is N-domain. Residue D34 coordinates Mg(2+). A DNA-binding site is contributed by R74. D90, E162, E164, D183, and D185 together coordinate Mg(2+). The tract at residues M126–Y257 is I-domain. E162 is a DNA binding site. 2 residues coordinate DNA: G235 and D237. Mg(2+) is bound at residue D237. The segment at T340–F348 is interaction with PCNA.

This sequence belongs to the XPG/RAD2 endonuclease family. FEN1 subfamily. In terms of assembly, interacts with PCNA. Three molecules of FEN1 bind to one PCNA trimer with each molecule binding to one PCNA monomer. PCNA stimulates the nuclease activity without altering cleavage specificity. Mg(2+) is required as a cofactor. Phosphorylated. Phosphorylation upon DNA damage induces relocalization to the nuclear plasma.

The protein resides in the nucleus. It localises to the nucleolus. Its subcellular location is the nucleoplasm. It is found in the mitochondrion. In terms of biological role, structure-specific nuclease with 5'-flap endonuclease and 5'-3' exonuclease activities involved in DNA replication and repair. During DNA replication, cleaves the 5'-overhanging flap structure that is generated by displacement synthesis when DNA polymerase encounters the 5'-end of a downstream Okazaki fragment. It enters the flap from the 5'-end and then tracks to cleave the flap base, leaving a nick for ligation. Also involved in the long patch base excision repair (LP-BER) pathway, by cleaving within the apurinic/apyrimidinic (AP) site-terminated flap. Acts as a genome stabilization factor that prevents flaps from equilibrating into structures that lead to duplications and deletions. Also possesses 5'-3' exonuclease activity on nicked or gapped double-stranded DNA, and exhibits RNase H activity. Also involved in replication and repair of rDNA and in repairing mitochondrial DNA. The polypeptide is Flap endonuclease 1 (Leishmania braziliensis).